A 313-amino-acid chain; its full sequence is Beta-ketoacyl-[acyl-carrier-protein] synthase III (313 aa).

Active-site residues include cysteine 112 and histidine 238. The ACP-binding stretch occupies residues 239-243 (QANIR). Residue asparagine 268 is part of the active site.

The protein belongs to the thiolase-like superfamily. FabH family. Homodimer.

It localises to the cytoplasm. The enzyme catalyses malonyl-[ACP] + acetyl-CoA + H(+) = 3-oxobutanoyl-[ACP] + CO2 + CoA. The protein operates within lipid metabolism; fatty acid biosynthesis. Functionally, catalyzes the condensation reaction of fatty acid synthesis by the addition to an acyl acceptor of two carbons from malonyl-ACP. Catalyzes the first condensation reaction which initiates fatty acid synthesis and may therefore play a role in governing the total rate of fatty acid production. Possesses both acetoacetyl-ACP synthase and acetyl transacylase activities. Its substrate specificity determines the biosynthesis of branched-chain and/or straight-chain of fatty acids. In Staphylococcus aureus (strain bovine RF122 / ET3-1), this protein is Beta-ketoacyl-[acyl-carrier-protein] synthase III.